The following is a 133-amino-acid chain: Interleukin-4 (133 aa).

The N-terminal stretch at 1-24 (MGLTSQLIPMLVCLLACTSNFVHG) is a signal peptide. Intrachain disulfides connect Cys-27–Cys-133, Cys-48–Cys-85, and Cys-70–Cys-105. N-linked (GlcNAc...) asparagine glycans are attached at residues Asn-62, Asn-96, and Asn-102.

It belongs to the IL-4/IL-13 family.

The protein localises to the secreted. Participates in at least several B-cell activation processes as well as of other cell types. It is a costimulator of DNA-synthesis. It induces the expression of class II MHC molecules on resting B-cells. It enhances both secretion and cell surface expression of IgE and IgG1. It also regulates the expression of the low affinity Fc receptor for IgE (CD23) on both lymphocytes and monocytes. Positively regulates IL31RA expression in macrophages. Stimulates autophagy in dendritic cells by interfering with mTORC1 signaling and through the induction of RUFY4. This Tursiops truncatus (Atlantic bottle-nosed dolphin) protein is Interleukin-4 (IL4).